A 430-amino-acid chain; its full sequence is Gamma-glutamyl phosphate reductase (430 aa).

Belongs to the gamma-glutamyl phosphate reductase family.

Its subcellular location is the cytoplasm. The catalysed reaction is L-glutamate 5-semialdehyde + phosphate + NADP(+) = L-glutamyl 5-phosphate + NADPH + H(+). Its pathway is amino-acid biosynthesis; L-proline biosynthesis; L-glutamate 5-semialdehyde from L-glutamate: step 2/2. Catalyzes the NADPH-dependent reduction of L-glutamate 5-phosphate into L-glutamate 5-semialdehyde and phosphate. The product spontaneously undergoes cyclization to form 1-pyrroline-5-carboxylate. The protein is Gamma-glutamyl phosphate reductase of Methylococcus capsulatus (strain ATCC 33009 / NCIMB 11132 / Bath).